The following is a 94-amino-acid chain: uncharacterized protein (94 aa).

Positions 33–42 (INSLPTFTKP) are enriched in polar residues. A disordered region spans residues 33-57 (INSLPTFTKPNDSNNNVNKSSNDGV). Residues 43 to 57 (NDSNNNVNKSSNDGV) show a composition bias toward low complexity.

This is an uncharacterized protein from Dictyostelium discoideum (Social amoeba).